Here is a 185-residue protein sequence, read N- to C-terminus: Large ribosomal subunit protein uL5 (185 aa).

The protein belongs to the universal ribosomal protein uL5 family. Part of the 50S ribosomal subunit; part of the 5S rRNA/L5/L18/L25 subcomplex. Contacts the 5S rRNA and the P site tRNA. Forms a bridge to the 30S subunit in the 70S ribosome.

This is one of the proteins that bind and probably mediate the attachment of the 5S RNA into the large ribosomal subunit, where it forms part of the central protuberance. In the 70S ribosome it contacts protein S13 of the 30S subunit (bridge B1b), connecting the 2 subunits; this bridge is implicated in subunit movement. Contacts the P site tRNA; the 5S rRNA and some of its associated proteins might help stabilize positioning of ribosome-bound tRNAs. The sequence is that of Large ribosomal subunit protein uL5 from Rhizobium etli (strain ATCC 51251 / DSM 11541 / JCM 21823 / NBRC 15573 / CFN 42).